The primary structure comprises 396 residues: 1-deoxy-D-xylulose 5-phosphate reductoisomerase (396 aa).

Residues threonine 15, glycine 16, serine 17, isoleucine 18, glycine 41, and asparagine 130 each contribute to the NADPH site. Lysine 131 lines the 1-deoxy-D-xylulose 5-phosphate pocket. An NADPH-binding site is contributed by glutamate 132. Residue aspartate 155 participates in Mn(2+) binding. Residues serine 156, glutamate 157, serine 181, and histidine 204 each contribute to the 1-deoxy-D-xylulose 5-phosphate site. Position 157 (glutamate 157) interacts with Mn(2+). Residue glycine 210 participates in NADPH binding. The 1-deoxy-D-xylulose 5-phosphate site is built by serine 217, asparagine 222, lysine 223, and glutamate 226. Position 226 (glutamate 226) interacts with Mn(2+).

The protein belongs to the DXR family. Mg(2+) is required as a cofactor. The cofactor is Mn(2+).

It catalyses the reaction 2-C-methyl-D-erythritol 4-phosphate + NADP(+) = 1-deoxy-D-xylulose 5-phosphate + NADPH + H(+). It functions in the pathway isoprenoid biosynthesis; isopentenyl diphosphate biosynthesis via DXP pathway; isopentenyl diphosphate from 1-deoxy-D-xylulose 5-phosphate: step 1/6. Catalyzes the NADPH-dependent rearrangement and reduction of 1-deoxy-D-xylulose-5-phosphate (DXP) to 2-C-methyl-D-erythritol 4-phosphate (MEP). This is 1-deoxy-D-xylulose 5-phosphate reductoisomerase from Bifidobacterium longum (strain DJO10A).